The chain runs to 178 residues: Ribose 1,5-bisphosphate phosphokinase PhnN (178 aa).

9–16 (GPSGSGKD) contacts ATP.

This sequence belongs to the ribose 1,5-bisphosphokinase family.

It carries out the reaction alpha-D-ribose 1,5-bisphosphate + ATP = 5-phospho-alpha-D-ribose 1-diphosphate + ADP. The protein operates within metabolic intermediate biosynthesis; 5-phospho-alpha-D-ribose 1-diphosphate biosynthesis; 5-phospho-alpha-D-ribose 1-diphosphate from D-ribose 5-phosphate (route II): step 3/3. Functionally, catalyzes the phosphorylation of ribose 1,5-bisphosphate to 5-phospho-D-ribosyl alpha-1-diphosphate (PRPP). The chain is Ribose 1,5-bisphosphate phosphokinase PhnN from Pantoea vagans (strain C9-1) (Pantoea agglomerans (strain C9-1)).